The sequence spans 147 residues: Large ribosomal subunit protein uL16 (147 aa).

Belongs to the universal ribosomal protein uL16 family. As to quaternary structure, part of the 50S ribosomal subunit.

Functionally, binds 23S rRNA and is also seen to make contacts with the A and possibly P site tRNAs. This Clostridium tetani (strain Massachusetts / E88) protein is Large ribosomal subunit protein uL16.